The sequence spans 185 residues: Protein TIFY 5 (185 aa).

Residues Ala38–Gln72 enclose the Tify domain. The tract at residues Lys77–Arg185 is disordered. Residues Pro137 to Ala157 show a composition bias toward low complexity. Positions Pro155–Tyr182 match the Jas motif. A Nuclear localization signal motif is present at residues Met162–Phe169.

This sequence belongs to the TIFY/JAZ family. Ubiquitinated. Targeted for degradation by the SCF(COI1) E3 ubiquitin ligase-proteasome pathway during jasmonate signaling.

It is found in the nucleus. Its function is as follows. Repressor of jasmonate responses. In Oryza sativa subsp. indica (Rice), this protein is Protein TIFY 5.